The sequence spans 632 residues: Chaperone protein DnaK (632 aa).

Phosphothreonine; by autocatalysis is present on Thr199. Residues 597–611 (AAQQAGQAEGQAAQE) are compositionally biased toward low complexity. Residues 597–632 (AAQQAGQAEGQAAQEPSQSTGNAQAEATDAEYEEVK) are disordered. A compositionally biased stretch (polar residues) spans 612 to 621 (PSQSTGNAQA).

The protein belongs to the heat shock protein 70 family.

Acts as a chaperone. This chain is Chaperone protein DnaK, found in Amoebophilus asiaticus (strain 5a2).